The following is a 292-amino-acid chain: Acetyl-coenzyme A carboxylase carboxyl transferase subunit beta (292 aa).

The region spanning 29 to 292 (LWVKCSECGQ…HGVKELVQTN (264 aa)) is the CoA carboxyltransferase N-terminal domain. Cys-33, Cys-36, Cys-52, and Cys-55 together coordinate Zn(2+). A C4-type zinc finger spans residues 33–55 (CSECGQVAYRKDLISNFNVCSNC).

Belongs to the AccD/PCCB family. As to quaternary structure, acetyl-CoA carboxylase is a heterohexamer composed of biotin carboxyl carrier protein (AccB), biotin carboxylase (AccC) and two subunits each of ACCase subunit alpha (AccA) and ACCase subunit beta (AccD). It depends on Zn(2+) as a cofactor.

The protein resides in the cytoplasm. It carries out the reaction N(6)-carboxybiotinyl-L-lysyl-[protein] + acetyl-CoA = N(6)-biotinyl-L-lysyl-[protein] + malonyl-CoA. It participates in lipid metabolism; malonyl-CoA biosynthesis; malonyl-CoA from acetyl-CoA: step 1/1. Component of the acetyl coenzyme A carboxylase (ACC) complex. Biotin carboxylase (BC) catalyzes the carboxylation of biotin on its carrier protein (BCCP) and then the CO(2) group is transferred by the transcarboxylase to acetyl-CoA to form malonyl-CoA. The chain is Acetyl-coenzyme A carboxylase carboxyl transferase subunit beta from Prochlorococcus marinus subsp. pastoris (strain CCMP1986 / NIES-2087 / MED4).